We begin with the raw amino-acid sequence, 492 residues long: GTPase-GDP dissociation stimulator arz1 (492 aa).

It localises to the cytoplasm. It is found in the nucleus. Probably acts as a GEF (guanine nucleotide exchange factor) for the Rho family of small GTP-binding proteins (G proteins) that stimulates the dissociation of GDP to enable subsequent binding of GTP. May also chaperone the processing and/or trafficking of small GTPases independently of GEF activity. May be involved in the control of polarized cell growth via CDC42-mediated signaling. May also be involved in the control of cell-wall organization via RHO1-mediated signaling. The protein is GTPase-GDP dissociation stimulator arz1 of Schizosaccharomyces pombe (strain 972 / ATCC 24843) (Fission yeast).